The primary structure comprises 775 residues: ATP-dependent 6-phosphofructokinase 2 (775 aa).

An N-terminal catalytic PFK domain 1 region spans residues 1 to 390 (MTNTILDTYS…YHSAYRHLNT (390 aa)). ATP contacts are provided by residues glycine 25, 88–89 (RC), and 118–121 (GDGS). Aspartate 119 serves as a coordination point for Mg(2+). Substrate-binding positions include 164–166 (SID), arginine 201, 208–210 (MGR), glutamate 264, arginine 292, and 298–301 (HIQR). The Proton acceptor role is filled by aspartate 166. The segment at 391–404 (SDHPKMVLPEDKRM) is interdomain linker. Residues 405-775 (RVAIIHVGAP…GRSSLYAIPN (371 aa)) are C-terminal regulatory PFK domain 2. Beta-D-fructose 2,6-bisphosphate is bound by residues 537-541 (SMSNN), 582-584 (QGA), aspartate 640, and 672-675 (HFQQ).

It belongs to the phosphofructokinase type A (PFKA) family. ATP-dependent PFK group I subfamily. Eukaryotic two domain clade 'E' sub-subfamily. In terms of assembly, homotetramer. The cofactor is Mg(2+).

Its subcellular location is the cytoplasm. It carries out the reaction beta-D-fructose 6-phosphate + ATP = beta-D-fructose 1,6-bisphosphate + ADP + H(+). It functions in the pathway carbohydrate degradation; glycolysis; D-glyceraldehyde 3-phosphate and glycerone phosphate from D-glucose: step 3/4. Its activity is regulated as follows. Allosterically activated by ADP, AMP, or fructose 2,6-bisphosphate, and allosterically inhibited by ATP or citrate. Its function is as follows. Catalyzes the phosphorylation of D-fructose 6-phosphate to fructose 1,6-bisphosphate by ATP, the first committing step of glycolysis. The polypeptide is ATP-dependent 6-phosphofructokinase 2 (pfkB) (Aspergillus oryzae (strain ATCC 42149 / RIB 40) (Yellow koji mold)).